Here is a 214-residue protein sequence, read N- to C-terminus: uncharacterized protein (214 aa).

The active-site Proton acceptor is tyrosine 129.

This sequence belongs to the NAD(P)-dependent epimerase/dehydratase family.

This is an uncharacterized protein from Bacillus subtilis (strain 168).